Consider the following 149-residue polypeptide: Pleckstrin homology domain-containing family J member 1 (149 aa).

The PH domain maps to 15-108; it reads PAEMAAELGM…WMAALRQASY (94 aa).

The polypeptide is Pleckstrin homology domain-containing family J member 1 (PLEKHJ1) (Bos taurus (Bovine)).